An 87-amino-acid polypeptide reads, in one-letter code: Small ribosomal subunit protein uS15c (87 aa).

This sequence belongs to the universal ribosomal protein uS15 family. As to quaternary structure, part of the 30S ribosomal subunit.

It localises to the plastid. The protein resides in the chloroplast. The polypeptide is Small ribosomal subunit protein uS15c (rps15) (Coffea arabica (Arabian coffee)).